The following is a 374-amino-acid chain: MAKSDYYEILGVSRDAEEREIKKAYKRQAMKFHPDRNRGNAEAEAKFKEIKEAYEVLTDAQKRAAYDQYGHAAFEQGGMGGGGASGADFSDIFGDVFGDIFGGGRRQRVSRGADLRYNMELSLEEAVRGVTREIRIPTLEECDVCHGSGAKPGTSAVTCPTCHGQGQVQMRQGFFAIQQTCPTCQGQGKIIKDPCTKCHGHGRVEKSKTLSVKIPAGVDTGDRIRLSGEGEVGEHGAAAGDLYVQVQVCKHPIFEREENNLYCEVPINFAMAALGGEIEVPTLDGRVKLKVPAETQTGKLFRMRGKGVKSVRGGSQGDLLCRVVVETPVKLNERQKQLLRELEESFGGPSGDQNSPRSKSFLDGVKKFFDDLTR.

The 66-residue stretch at 5 to 70 (DYYEILGVSR…QKRAAYDQYG (66 aa)) folds into the J domain. The segment at 129 to 207 (GVTREIRIPT…CHGHGRVEKS (79 aa)) adopts a CR-type zinc-finger fold. Positions 142, 145, 159, 162, 181, 184, 195, and 198 each coordinate Zn(2+). CXXCXGXG motif repeat units lie at residues 142-149 (CDVCHGSG), 159-166 (CPTCHGQG), 181-188 (CPTCQGQG), and 195-202 (CTKCHGHG).

It belongs to the DnaJ family. In terms of assembly, homodimer. The cofactor is Zn(2+).

It localises to the cytoplasm. Participates actively in the response to hyperosmotic and heat shock by preventing the aggregation of stress-denatured proteins and by disaggregating proteins, also in an autonomous, DnaK-independent fashion. Unfolded proteins bind initially to DnaJ; upon interaction with the DnaJ-bound protein, DnaK hydrolyzes its bound ATP, resulting in the formation of a stable complex. GrpE releases ADP from DnaK; ATP binding to DnaK triggers the release of the substrate protein, thus completing the reaction cycle. Several rounds of ATP-dependent interactions between DnaJ, DnaK and GrpE are required for fully efficient folding. Also involved, together with DnaK and GrpE, in the DNA replication of plasmids through activation of initiation proteins. The protein is Chaperone protein DnaJ of Sodalis glossinidius (strain morsitans).